A 339-amino-acid polypeptide reads, in one-letter code: Ribosome biogenesis protein BRX1 homolog (339 aa).

Residues 1 to 34 (MSAYKRKRGSLPEVATNTKKAKKQLAGSEQEATA) form a disordered region. One can recognise a Brix domain in the interval 53 to 242 (ERVLIFSSRG…LIKIFKGSFG (190 aa)). The interval 304–339 (AEEKPQVIETEPPAPKPKMKRKDKQFKRQRMAKKRM) is disordered. Over residues 320–339 (PKMKRKDKQFKRQRMAKKRM) the composition is skewed to basic residues.

The protein belongs to the BRX1 family. As to expression, ubiquitous.

Its subcellular location is the nucleus. It is found in the nucleolus. Functionally, required for biogenesis of the 60S ribosomal subunit. In Xenopus laevis (African clawed frog), this protein is Ribosome biogenesis protein BRX1 homolog (brix1).